A 158-amino-acid chain; its full sequence is Ribosomal RNA large subunit methyltransferase H (158 aa).

S-adenosyl-L-methionine contacts are provided by residues leucine 76, glycine 107, and 126-131; that span reads LSGLTM.

It belongs to the RNA methyltransferase RlmH family. Homodimer.

Its subcellular location is the cytoplasm. The catalysed reaction is pseudouridine(1915) in 23S rRNA + S-adenosyl-L-methionine = N(3)-methylpseudouridine(1915) in 23S rRNA + S-adenosyl-L-homocysteine + H(+). Functionally, specifically methylates the pseudouridine at position 1915 (m3Psi1915) in 23S rRNA. The protein is Ribosomal RNA large subunit methyltransferase H of Teredinibacter turnerae (strain ATCC 39867 / T7901).